We begin with the raw amino-acid sequence, 200 residues long: Large ribosomal subunit protein uL4 (200 aa).

Positions 38–68 (GRQGSKQQKTRSDVRGGGKRPWRQKGTGRAR) are disordered. Positions 54-65 (GGKRPWRQKGTG) are enriched in basic residues.

It belongs to the universal ribosomal protein uL4 family. In terms of assembly, part of the 50S ribosomal subunit.

One of the primary rRNA binding proteins, this protein initially binds near the 5'-end of the 23S rRNA. It is important during the early stages of 50S assembly. It makes multiple contacts with different domains of the 23S rRNA in the assembled 50S subunit and ribosome. Functionally, forms part of the polypeptide exit tunnel. The chain is Large ribosomal subunit protein uL4 from Pseudomonas fluorescens (strain SBW25).